The primary structure comprises 503 residues: ATP synthase subunit alpha (503 aa).

169–176 (GDRKTGKT) provides a ligand contact to ATP.

The protein belongs to the ATPase alpha/beta chains family. In terms of assembly, F-type ATPases have 2 components, CF(1) - the catalytic core - and CF(0) - the membrane proton channel. CF(1) has five subunits: alpha(3), beta(3), gamma(1), delta(1), epsilon(1). CF(0) has three main subunits: a(1), b(2) and c(9-12). The alpha and beta chains form an alternating ring which encloses part of the gamma chain. CF(1) is attached to CF(0) by a central stalk formed by the gamma and epsilon chains, while a peripheral stalk is formed by the delta and b chains.

It localises to the cell membrane. The catalysed reaction is ATP + H2O + 4 H(+)(in) = ADP + phosphate + 5 H(+)(out). Produces ATP from ADP in the presence of a proton gradient across the membrane. The alpha chain is a regulatory subunit. This chain is ATP synthase subunit alpha, found in Lactobacillus helveticus (strain DPC 4571).